A 143-amino-acid polypeptide reads, in one-letter code: Transcriptional regulator MraZ (143 aa).

2 consecutive SpoVT-AbrB domains span residues 5–47 (TYTP…PREE) and 76–119 (TDEQ…DAQA).

It belongs to the MraZ family. As to quaternary structure, forms oligomers.

The protein localises to the cytoplasm. It is found in the nucleoid. This Rhodococcus opacus (strain B4) protein is Transcriptional regulator MraZ.